The chain runs to 350 residues: Biotin synthase (350 aa).

In terms of domain architecture, Radical SAM core spans 41–268 (NEVQISRLLS…LSRVRLSAGR (228 aa)). 3 residues coordinate [4Fe-4S] cluster: Cys56, Cys60, and Cys63. The [2Fe-2S] cluster site is built by Cys100, Cys131, Cys191, and Arg263.

This sequence belongs to the radical SAM superfamily. Biotin synthase family. As to quaternary structure, homodimer. [4Fe-4S] cluster is required as a cofactor. It depends on [2Fe-2S] cluster as a cofactor.

The enzyme catalyses (4R,5S)-dethiobiotin + (sulfur carrier)-SH + 2 reduced [2Fe-2S]-[ferredoxin] + 2 S-adenosyl-L-methionine = (sulfur carrier)-H + biotin + 2 5'-deoxyadenosine + 2 L-methionine + 2 oxidized [2Fe-2S]-[ferredoxin]. It participates in cofactor biosynthesis; biotin biosynthesis; biotin from 7,8-diaminononanoate: step 2/2. Its function is as follows. Catalyzes the conversion of dethiobiotin (DTB) to biotin by the insertion of a sulfur atom into dethiobiotin via a radical-based mechanism. The sequence is that of Biotin synthase from Shewanella putrefaciens (strain CN-32 / ATCC BAA-453).